Reading from the N-terminus, the 139-residue chain is MTERTFSIIKPDATRRNLTGKVNAVIEDAGLRIVAQKRIRMSRAQAEKFYEVHKERPFFGELVEFMTSAPVVVQVLEGENAVARYREVMGATNPAQAADGTIRKLYAESVGENSVHGSDSLENAKIEIAQFFTEDEIVG.

ATP-binding residues include K10, F58, R86, T92, R103, and N113. The active-site Pros-phosphohistidine intermediate is H116.

This sequence belongs to the NDK family. In terms of assembly, homotetramer. The cofactor is Mg(2+).

Its subcellular location is the cytoplasm. It carries out the reaction a 2'-deoxyribonucleoside 5'-diphosphate + ATP = a 2'-deoxyribonucleoside 5'-triphosphate + ADP. It catalyses the reaction a ribonucleoside 5'-diphosphate + ATP = a ribonucleoside 5'-triphosphate + ADP. In terms of biological role, major role in the synthesis of nucleoside triphosphates other than ATP. The ATP gamma phosphate is transferred to the NDP beta phosphate via a ping-pong mechanism, using a phosphorylated active-site intermediate. The protein is Nucleoside diphosphate kinase of Phenylobacterium zucineum (strain HLK1).